A 343-amino-acid chain; its full sequence is Polyprenal reductase 2 (343 aa).

Helical transmembrane passes span 12–32 (GAWITVWIVSILPLVIASIPT), 66–86 (FAHFYVIGVVWTTLLLAATWM), 164–184 (MHILGYFAGLFFYVTAPLSLC), 223–243 (PLMKLGSLQWIGGAIFLWGWI), 266–286 (IIPYGDWFGMVSSPHFLAEIV), and 291–311 (LLIASGGTDITIWLLFGFVAA).

The protein belongs to the steroid 5-alpha reductase family. Polyprenal reductase subfamily. Expressed in roots, leaves, stems and flowers.

It is found in the endoplasmic reticulum membrane. It carries out the reaction a di-trans,poly-cis-dolichal + NADP(+) = a di-trans,poly-cis-polyprenal + NADPH + H(+). The protein operates within protein modification; protein glycosylation. In terms of biological role, plays a key role in early steps of protein N-linked glycosylation by being involved in the conversion of polyprenol into dolichol. Acts as a polyprenal reductase that mediates the reduction of polyprenal into dolichal in a NADP-dependent mechanism. Dolichols are required for the synthesis of dolichol-linked monosaccharides and the oligosaccharide precursor used for N-glycosylation. Involved in the regulation of plant growth and reproductive processes. The sequence is that of Polyprenal reductase 2 from Arabidopsis thaliana (Mouse-ear cress).